Reading from the N-terminus, the 652-residue chain is Na(+)/H(+) antiporter NhaA 1 (652 aa).

The na(+)/H(+) antiporter NhaA stretch occupies residues 1–427 (MTGELPRGRR…VGASLTTWLV (427 aa)). The next 11 membrane-spanning stretches (helical) occupy residues 27 to 47 (AFLH…VVAL), 78 to 98 (LRYW…GLEV), 114 to 134 (TLPL…YLAF), 142 to 162 (VGWG…LAVL), 173 to 193 (FLLT…AIAY), 200 to 220 (TALF…AAGG), 227 to 247 (LLLG…PVVV), 312 to 332 (LIVP…ELLA), 343 to 363 (VLFA…MLVA), 376 to 396 (WAAI…ALLI), and 411 to 431 (IGIL…FRLA). Residues 428 to 623 (FRLAARLPPA…LSAAVTSAFA (196 aa)) form the Thioredoxin domain. Residues 626–652 (RLRPRDDREPDRRREVGSEQPDEEPGT) are disordered. The segment covering 628–642 (RPRDDREPDRRREVG) has biased composition (basic and acidic residues).

This sequence in the N-terminal section; belongs to the NhaA Na(+)/H(+) (TC 2.A.33) antiporter family.

The protein resides in the cell membrane. It carries out the reaction Na(+)(in) + 2 H(+)(out) = Na(+)(out) + 2 H(+)(in). In terms of biological role, na(+)/H(+) antiporter that extrudes sodium in exchange for external protons. The polypeptide is Na(+)/H(+) antiporter NhaA 1 (Salinispora arenicola (strain CNS-205)).